A 285-amino-acid polypeptide reads, in one-letter code: Protoheme IX farnesyltransferase (285 aa).

The next 9 membrane-spanning stretches (helical) occupy residues 8-28 (ITKP…FLFA), 36-56 (YVLF…ACVF), 80-100 (LLPV…GLSI), 107-127 (FISM…YTMF), 133-153 (FYST…GYTA), 163-183 (ILLF…ISIM), 209-229 (IFFY…LGYL), 232-252 (NFLL…YSNI), and 265-285 (FYFS…DVFF).

It belongs to the UbiA prenyltransferase family. Protoheme IX farnesyltransferase subfamily.

The protein resides in the cell membrane. It carries out the reaction heme b + (2E,6E)-farnesyl diphosphate + H2O = Fe(II)-heme o + diphosphate. The protein operates within porphyrin-containing compound metabolism; heme O biosynthesis; heme O from protoheme: step 1/1. Converts heme B (protoheme IX) to heme O by substitution of the vinyl group on carbon 2 of heme B porphyrin ring with a hydroxyethyl farnesyl side group. The sequence is that of Protoheme IX farnesyltransferase from Buchnera aphidicola subsp. Acyrthosiphon pisum (strain Tuc7).